The sequence spans 253 residues: Sporulated oocyst TA4 antigen (253 aa).

Residues Met1–Ala23 form the signal peptide. Positions Arg182–Leu184 are cleaved as a propeptide — removed in mature form.

The TA4 antigen is composed of a 17 kDa and a 8 kDa chain, linked by a disulfide bond.

This Eimeria tenella (Coccidian parasite) protein is Sporulated oocyst TA4 antigen.